Consider the following 342-residue polypeptide: 4-hydroxy-2-oxovalerate aldolase (342 aa).

One can recognise a Pyruvate carboxyltransferase domain in the interval 7 to 257 (VWITEVALRD…KTGIDLYKMM (251 aa)). 15–16 (RD) contributes to the substrate binding site. A Mn(2+)-binding site is contributed by D16. The Proton acceptor role is filled by H19. S169 and H196 together coordinate substrate. The Mn(2+) site is built by H196 and H198. Y287 provides a ligand contact to substrate.

This sequence belongs to the 4-hydroxy-2-oxovalerate aldolase family.

The enzyme catalyses (S)-4-hydroxy-2-oxopentanoate = acetaldehyde + pyruvate. The sequence is that of 4-hydroxy-2-oxovalerate aldolase (pheE) from Geobacillus stearothermophilus (Bacillus stearothermophilus).